Consider the following 238-residue polypeptide: Probable transcriptional regulatory protein YeeN (238 aa).

This sequence belongs to the TACO1 family. YeeN subfamily.

The protein resides in the cytoplasm. This is Probable transcriptional regulatory protein YeeN from Escherichia coli (strain UTI89 / UPEC).